We begin with the raw amino-acid sequence, 83 residues long: Sec-independent protein translocase protein TatA (83 aa).

Residues 1 to 21 (MGNMGIWQLLIIAVIVILLFG) form a helical membrane-spanning segment. 2 stretches are compositionally biased toward basic and acidic residues: residues 47–57 (EEKKALEETAS) and 71–83 (AEKK…KEQV). A disordered region spans residues 47–83 (EEKKALEETASEKATPSVEKTAPNAEKKTETKDKEQV).

It belongs to the TatA/E family. The Tat system comprises two distinct complexes: a TatABC complex, containing multiple copies of TatA, TatB and TatC subunits, and a separate TatA complex, containing only TatA subunits. Substrates initially bind to the TatABC complex, which probably triggers association of the separate TatA complex to form the active translocon.

Its subcellular location is the cell inner membrane. Part of the twin-arginine translocation (Tat) system that transports large folded proteins containing a characteristic twin-arginine motif in their signal peptide across membranes. TatA could form the protein-conducting channel of the Tat system. The protein is Sec-independent protein translocase protein TatA of Shewanella woodyi (strain ATCC 51908 / MS32).